The chain runs to 156 residues: Small ribosomal subunit protein uS7 (156 aa).

It belongs to the universal ribosomal protein uS7 family. Part of the 30S ribosomal subunit. Contacts proteins S9 and S11.

One of the primary rRNA binding proteins, it binds directly to 16S rRNA where it nucleates assembly of the head domain of the 30S subunit. Is located at the subunit interface close to the decoding center, probably blocks exit of the E-site tRNA. The sequence is that of Small ribosomal subunit protein uS7 from Neisseria meningitidis serogroup C (strain 053442).